The sequence spans 217 residues: Probable GTP-binding protein EngB (217 aa).

The EngB-type G domain maps to 29–213 (GPLEVAFAGR…RQAIAETVGI (185 aa)). Residues 37–44 (GRSNVGKS), 64–68 (GRTQE), 91–94 (DMPG), 158–161 (TKTD), and 192–194 (TSS) each bind GTP. Positions 44 and 66 each coordinate Mg(2+).

It belongs to the TRAFAC class TrmE-Era-EngA-EngB-Septin-like GTPase superfamily. EngB GTPase family. The cofactor is Mg(2+).

Functionally, necessary for normal cell division and for the maintenance of normal septation. This is Probable GTP-binding protein EngB from Rhizobium johnstonii (strain DSM 114642 / LMG 32736 / 3841) (Rhizobium leguminosarum bv. viciae).